The primary structure comprises 349 residues: Isopentenyl-diphosphate delta-isomerase (349 aa).

6–7 (RK) contacts substrate. FMN-binding positions include 62–64 (AMT), S93, and N122. Q152 contacts substrate. Residue E153 participates in Mg(2+) binding. Residues K184, T214, 258-259 (GG), and 280-281 (AG) each bind FMN.

The protein belongs to the IPP isomerase type 2 family. In terms of assembly, homooctamer. Dimer of tetramers. The cofactor is FMN. It depends on NADPH as a cofactor. Mg(2+) is required as a cofactor.

It is found in the cytoplasm. The enzyme catalyses isopentenyl diphosphate = dimethylallyl diphosphate. Its function is as follows. Involved in the biosynthesis of isoprenoids. Catalyzes the 1,3-allylic rearrangement of the homoallylic substrate isopentenyl (IPP) to its allylic isomer, dimethylallyl diphosphate (DMAPP). The polypeptide is Isopentenyl-diphosphate delta-isomerase (Bacillus thuringiensis subsp. konkukian (strain 97-27)).